The following is a 469-amino-acid chain: MTTHKDLIDRDRKVTFHASTHLRDFAHGDAPGRVITGGKGIKIVDKDGREFIDGFAGLYCVNIGYGRSEVAEAIYQQALEMSYYHTYVGHSNEPQIALSEKILELAGPGMSKVYYGMSGSDANETQLKIVRYYNNVLGRPQKKKVISRMRGYHGSGIASGSLTGLKAFHDHFDLPIETIRHTEAPYYYHRAAEQEGMTEREFSKHCAAKLEEMILAEGPDTVAAFIGEPVLGTGGIVPPPEGYWDEIQAVLTKYDVLLIADEVVCGFGRTGSDFGSHHYGIKPDLITIAKGLTSAYQPLSGVIVGDRVWEVLEQGTGEYGPIGHGWTYSGHALGCAAGLANLAIIEREGLTANAAETGAYLQERMKAAFADHPVVGQVRGVGMMAALEFSVDPAARRHFDPSLKVGPRMSAAALEEDLIARAMPQGDILGFAPPLTTTREEVDEIVARTERAVNKVTDALTREGAIQAA.

Lys290 carries the post-translational modification N6-(pyridoxal phosphate)lysine.

It belongs to the class-III pyridoxal-phosphate-dependent aminotransferase family. Requires pyridoxal 5'-phosphate as cofactor.

The protein localises to the cytoplasm. It catalyses the reaction L-2,4-diaminobutanoate + 2-oxoglutarate = L-aspartate 4-semialdehyde + L-glutamate. Functionally, involved in the degradation of ectoine, which allows H.elongata to utilize ectoine as both a carbon and a nitrogen source for growth. Probably catalyzes the conversion of L-2,4-diaminobutyrate (DABA) to L-aspartate beta-semialdehyde (ASA) by transamination with 2-oxoglutarate. The sequence is that of Diaminobutyrate--2-oxoglutarate transaminase from Halomonas elongata (strain ATCC 33173 / DSM 2581 / NBRC 15536 / NCIMB 2198 / 1H9).